The sequence spans 119 residues: NAD(P)H-quinone oxidoreductase subunit M (119 aa).

It belongs to the complex I NdhM subunit family. As to quaternary structure, NDH-1 can be composed of about 15 different subunits; different subcomplexes with different compositions have been identified which probably have different functions.

It localises to the cellular thylakoid membrane. The enzyme catalyses a plastoquinone + NADH + (n+1) H(+)(in) = a plastoquinol + NAD(+) + n H(+)(out). It catalyses the reaction a plastoquinone + NADPH + (n+1) H(+)(in) = a plastoquinol + NADP(+) + n H(+)(out). Functionally, NDH-1 shuttles electrons from an unknown electron donor, via FMN and iron-sulfur (Fe-S) centers, to quinones in the respiratory and/or the photosynthetic chain. The immediate electron acceptor for the enzyme in this species is believed to be plastoquinone. Couples the redox reaction to proton translocation, and thus conserves the redox energy in a proton gradient. Cyanobacterial NDH-1 also plays a role in inorganic carbon-concentration. The polypeptide is NAD(P)H-quinone oxidoreductase subunit M (Crocosphaera subtropica (strain ATCC 51142 / BH68) (Cyanothece sp. (strain ATCC 51142))).